A 210-amino-acid chain; its full sequence is uncharacterized protein (210 aa).

This is an uncharacterized protein from Nostoc sp. (strain PCC 7120 / SAG 25.82 / UTEX 2576).